The chain runs to 259 residues: Bisphosphoglycerate mutase (259 aa).

S2 is subject to N-acetylserine. Substrate contacts are provided by residues 10–17 (RHGEGAWN), 23–24 (CS), R62, 89–92 (ERHY), R100, and 116–117 (RR). The Tele-phosphohistidine intermediate role is filled by H11. E89 (proton donor/acceptor) is an active-site residue. Residue T122 is modified to Phosphothreonine. 189–190 (GN) lines the substrate pocket.

The protein belongs to the phosphoglycerate mutase family. BPG-dependent PGAM subfamily. In terms of assembly, homodimer.

It carries out the reaction (2R)-3-phospho-glyceroyl phosphate = (2R)-2,3-bisphosphoglycerate + H(+). The catalysed reaction is (2R)-2-phosphoglycerate = (2R)-3-phosphoglycerate. Its activity is regulated as follows. At alkaline pH BPGM favors the synthase reaction; however, at lower pH the phosphatase reaction is dominant. Inhibited by citrate. Functionally, plays a major role in regulating hemoglobin oxygen affinity by controlling the levels of its allosteric effector 2,3-bisphosphoglycerate (2,3-BPG). Also exhibits mutase (EC 5.4.2.11) activity. The protein is Bisphosphoglycerate mutase (BPGM) of Macaca fascicularis (Crab-eating macaque).